The sequence spans 158 residues: 6,7-dimethyl-8-ribityllumazine synthase (158 aa).

5-amino-6-(D-ribitylamino)uracil-binding positions include F24, 58–60 (AFE), and 82–84 (AVI). A (2S)-2-hydroxy-3-oxobutyl phosphate-binding site is contributed by 87–88 (GT). The Proton donor role is filled by H90. A 5-amino-6-(D-ribitylamino)uracil-binding site is contributed by F115. R129 is a binding site for (2S)-2-hydroxy-3-oxobutyl phosphate.

It belongs to the DMRL synthase family. As to quaternary structure, forms an icosahedral capsid composed of 60 subunits, arranged as a dodecamer of pentamers.

It carries out the reaction (2S)-2-hydroxy-3-oxobutyl phosphate + 5-amino-6-(D-ribitylamino)uracil = 6,7-dimethyl-8-(1-D-ribityl)lumazine + phosphate + 2 H2O + H(+). The protein operates within cofactor biosynthesis; riboflavin biosynthesis; riboflavin from 2-hydroxy-3-oxobutyl phosphate and 5-amino-6-(D-ribitylamino)uracil: step 1/2. Catalyzes the formation of 6,7-dimethyl-8-ribityllumazine by condensation of 5-amino-6-(D-ribitylamino)uracil with 3,4-dihydroxy-2-butanone 4-phosphate. This is the penultimate step in the biosynthesis of riboflavin. The polypeptide is 6,7-dimethyl-8-ribityllumazine synthase (Stutzerimonas stutzeri (strain A1501) (Pseudomonas stutzeri)).